The chain runs to 429 residues: Transcriptional coactivator AacuS (429 aa).

Positions 80–144 (MASQTQLLAC…GFLQEPELGH (65 aa)) constitute an HTH iclR-type domain. The H-T-H motif DNA-binding region spans 110-129 (IKDVAELIGVPENHICRIVR).

The protein localises to the nucleus. In terms of biological role, transcriptional coactivator; part of the gene cluster that mediates the biosynthesis of the tetrahydroxanthone dimer secalonic acid D. In Aspergillus aculeatus (strain ATCC 16872 / CBS 172.66 / WB 5094), this protein is Transcriptional coactivator AacuS.